The following is a 540-amino-acid chain: L-aspartate oxidase (540 aa).

FAD contacts are provided by residues 16 to 19, lysine 38, 45 to 52, and aspartate 223; these read SGAA and STFYAQGG. The active-site Proton donor/acceptor is arginine 290. FAD contacts are provided by residues glutamate 375 and 391–392; that span reads SL.

This sequence belongs to the FAD-dependent oxidoreductase 2 family. NadB subfamily. It depends on FAD as a cofactor.

The protein resides in the cytoplasm. The catalysed reaction is L-aspartate + O2 = iminosuccinate + H2O2. Its pathway is cofactor biosynthesis; NAD(+) biosynthesis; iminoaspartate from L-aspartate (oxidase route): step 1/1. Functionally, catalyzes the oxidation of L-aspartate to iminoaspartate, the first step in the de novo biosynthesis of NAD(+). The protein is L-aspartate oxidase (nadB) of Salmonella typhimurium (strain LT2 / SGSC1412 / ATCC 700720).